The sequence spans 298 residues: Probable phosphoserine phosphatase (298 aa).

Asp82 serves as the catalytic Nucleophile. Positions 82 and 84 each coordinate Mg(2+). The active-site Proton donor is Asp84. Residues Glu91, Arg127, 170–171, and Lys217 each bind substrate; that span reads SG. A Mg(2+)-binding site is contributed by Asp240. Asn243 is a binding site for substrate.

It belongs to the HAD-like hydrolase superfamily. SerB family. Mg(2+) serves as cofactor.

The enzyme catalyses O-phospho-L-serine + H2O = L-serine + phosphate. It carries out the reaction O-phospho-D-serine + H2O = D-serine + phosphate. The protein operates within amino-acid biosynthesis; L-serine biosynthesis; L-serine from 3-phospho-D-glycerate: step 3/3. The sequence is that of Probable phosphoserine phosphatase from Schizosaccharomyces pombe (strain 972 / ATCC 24843) (Fission yeast).